The primary structure comprises 223 residues: Voltage-dependent calcium channel gamma-1 subunit (223 aa).

Topologically, residues 1 to 10 (MSQTKTAKVR) are cytoplasmic. A helical membrane pass occupies residues 11–29 (VTLFFILAGGVLAMVAVVT). The Extracellular portion of the chain corresponds to 30 to 109 (DHWAVLSPHL…TQKEYSISAA (80 aa)). Asn43 and Asn80 each carry an N-linked (GlcNAc...) asparagine glycan. A disulfide bridge connects residues Cys57 and Cys81. A helical transmembrane segment spans residues 110–130 (AIAIFSLGFIIIGSICAFLSF). At 131-135 (GNKRD) the chain is on the cytoplasmic side. Residues 136–156 (YLLRPASMFYAFAGLCLIVSV) form a helical membrane-spanning segment. Residues 157–180 (EVMRQSVKRMIDSEDTVWIEYYYS) are Extracellular-facing. The helical transmembrane segment at 181–205 (WSFACACAGFTLLFLGGLFLLLFSL) threads the bilayer. Topologically, residues 206–223 (PRMPQNPWESCMDTESEH) are cytoplasmic.

This sequence belongs to the PMP-22/EMP/MP20 family. CACNG subfamily. As to quaternary structure, component of a calcium channel complex consisting of a pore-forming alpha subunit (CACNA1S) and the ancillary subunits CACNB1 or CACNB2, CACNG1 and CACNA2D1. The channel complex contains alpha, beta, gamma and delta subunits in a 1:1:1:1 ratio, i.e. it contains either CACNB1 or CACNB2. N-glycosylated. Skeletal muscle.

The protein resides in the cell membrane. It is found in the sarcolemma. Functionally, regulatory subunit of the voltage-gated calcium channel that gives rise to L-type calcium currents in skeletal muscle. Regulates channel inactivation kinetics. This is Voltage-dependent calcium channel gamma-1 subunit (Cacng1) from Rattus norvegicus (Rat).